Consider the following 397-residue polypeptide: Mannonate dehydratase (397 aa).

This sequence belongs to the mannonate dehydratase family. It depends on Fe(2+) as a cofactor. Mn(2+) serves as cofactor.

The enzyme catalyses D-mannonate = 2-dehydro-3-deoxy-D-gluconate + H2O. It participates in carbohydrate metabolism; pentose and glucuronate interconversion. Functionally, catalyzes the dehydration of D-mannonate. The chain is Mannonate dehydratase from Yersinia pestis bv. Antiqua (strain Antiqua).